A 579-amino-acid chain; its full sequence is Fatty-acid amide hydrolase 1 (579 aa).

A helical transmembrane segment spans residues 9-29 (ALPGASGVALACCFVAAAVAL). Residues 30–403 (RWSGRRTARG…GDFVDPCLGD (374 aa)) are Cytoplasmic-facing. Lys-142 (charge relay system) is an active-site residue. Residues Met-191, Ser-217, and 238–241 (IGGS) each bind substrate. Catalysis depends on Ser-217, which acts as the Charge relay system. The Acyl-ester intermediate role is filled by Ser-241. Phosphoserine is present on Ser-241. Residues 404-433 (LVSILKLPQWLKGLLAFLVKPLLPRLSAFL) lie within the membrane without spanning it. At 434–579 (SNMKSRSAGK…RLMTPEKQSS (146 aa)) the chain is on the cytoplasmic side.

This sequence belongs to the amidase family. In terms of assembly, homodimer. In terms of tissue distribution, highly expressed in the brain, small intestine, pancreas, skeletal muscle and testis. Also expressed in the kidney, liver, lung, placenta and prostate.

The protein localises to the endomembrane system. It localises to the cytoplasm. Its subcellular location is the cytoskeleton. It catalyses the reaction N-(5Z,8Z,11Z,14Z-eicosatetraenoyl)-ethanolamine + H2O = ethanolamine + (5Z,8Z,11Z,14Z)-eicosatetraenoate. It carries out the reaction (9Z)-octadecenamide + H2O = (9Z)-octadecenoate + NH4(+). The catalysed reaction is 2-(5Z,8Z,11Z,14Z-eicosatetraenoyl)-glycerol + H2O = glycerol + (5Z,8Z,11Z,14Z)-eicosatetraenoate + H(+). The enzyme catalyses N-(9Z-octadecenoyl) ethanolamine + H2O = ethanolamine + (9Z)-octadecenoate. It catalyses the reaction N-hexadecanoylethanolamine + H2O = ethanolamine + hexadecanoate. It carries out the reaction hexadecanamide + H2O = hexadecanoate + NH4(+). The catalysed reaction is tetradecamide + H2O = tetradecanoate + NH4(+). The enzyme catalyses N-(9Z-octadecenoyl)-taurine + H2O = taurine + (9Z)-octadecenoate. It catalyses the reaction (9Z,12Z,15Z)-octadecatrienamide + H2O = (9Z,12Z,15Z)-octadecatrienoate + NH4(+). It carries out the reaction (5Z,8Z,11Z,14Z)-eicosatetraenamide + H2O = (5Z,8Z,11Z,14Z)-eicosatetraenoate + NH4(+). The catalysed reaction is (6Z)-octadecenamide + H2O = (6Z)-octadecenoate + NH4(+). The enzyme catalyses (15Z)-tetracosenamide + H2O = (15Z)-tetracosenoate + NH4(+). It catalyses the reaction (8Z,11Z,14Z)-eicosatrienamide + H2O = (8Z,11Z,14Z)-eicosatrienoate + NH4(+). It carries out the reaction (11Z,14Z,17Z)-eicosatrienamide + H2O = (11Z,14Z,17Z)-eicosatrienoate + NH4(+). The catalysed reaction is (11Z,14Z)-eicosadienamide + H2O = (11Z,14Z)-eicosadienoate + NH4(+). The enzyme catalyses (9Z,12Z)-octadecadienamide + H2O = (9Z,12Z)-octadecadienoate + NH4(+). It catalyses the reaction 1-O-methyl-(5Z,8Z,11Z,14Z)-eicosatetraenoate + H2O = methanol + (5Z,8Z,11Z,14Z)-eicosatetraenoate + H(+). It carries out the reaction (11Z)-eicosenamide + H2O = (11Z)-eicosenoate + NH4(+). The catalysed reaction is N-(9Z-hexadecenoyl) ethanolamine + H2O = (9Z)-hexadecenoate + ethanolamine. The enzyme catalyses N-octadecanoyl ethanolamine + H2O = octadecanoate + ethanolamine. It catalyses the reaction N-docosanoyl-ethanolamine + H2O = docosanoate + ethanolamine. It carries out the reaction N-tetracosanoyl-taurine + H2O = tetracosanoate + taurine. The catalysed reaction is N-(15Z-tetracosenoyl)-ethanolamine + H2O = (15Z)-tetracosenoate + ethanolamine. The enzyme catalyses N-docosanoyl-taurine + H2O = docosanoate + taurine. It catalyses the reaction N-(15Z-tetracosenoyl)-taurine + H2O = (15Z)-tetracosenoate + taurine. It carries out the reaction N-tricosanoyl-taurine + H2O = tricosanoate + taurine. The catalysed reaction is (9Z)-octadecenoate + glycine = N-(9Z-octadecenoyl)glycine + H2O. The enzyme catalyses N-(5Z,8Z,11Z,14Z)-eicosatetraenoyl-glycine + H2O = (5Z,8Z,11Z,14Z)-eicosatetraenoate + glycine. It catalyses the reaction N-(5Z,8Z,11Z,14Z-eicosatetraenoyl)-L-serine + H2O = (5Z,8Z,11Z,14Z)-eicosatetraenoate + L-serine. Inhibited by O-aryl carbamates and alpha-keto heterocycles. Inhibited by trifluoromethyl ketone. Its function is as follows. Catalyzes the hydrolysis of endogenous amidated lipids like the sleep-inducing lipid oleamide ((9Z)-octadecenamide), the endocannabinoid anandamide (N-(5Z,8Z,11Z,14Z-eicosatetraenoyl)-ethanolamine), as well as other fatty amides, to their corresponding fatty acids, thereby regulating the signaling functions of these molecules. Hydrolyzes polyunsaturated substrate anandamide preferentially as compared to monounsaturated substrates. It can also catalyze the hydrolysis of the endocannabinoid 2-arachidonoylglycerol (2-(5Z,8Z,11Z,14Z-eicosatetraenoyl)-glycerol). FAAH cooperates with PM20D1 in the hydrolysis of amino acid-conjugated fatty acids such as N-fatty acyl glycine and N-fatty acyl-L-serine, thereby acting as a physiological regulator of specific subsets of intracellular, but not of extracellular, N-fatty acyl amino acids. The protein is Fatty-acid amide hydrolase 1 (FAAH) of Homo sapiens (Human).